A 514-amino-acid polypeptide reads, in one-letter code: 2,3-bisphosphoglycerate-independent phosphoglycerate mutase (514 aa).

2 residues coordinate Mn(2+): Asp13 and Ser63. Ser63 acts as the Phosphoserine intermediate in catalysis. Residues His124, 154 to 155 (RD), Arg186, Arg192, 258 to 261 (RADR), and Lys332 contribute to the substrate site. The Mn(2+) site is built by Asp399, His403, Asp440, His441, and His459.

This sequence belongs to the BPG-independent phosphoglycerate mutase family. In terms of assembly, monomer. It depends on Mn(2+) as a cofactor.

It catalyses the reaction (2R)-2-phosphoglycerate = (2R)-3-phosphoglycerate. It participates in carbohydrate degradation; glycolysis; pyruvate from D-glyceraldehyde 3-phosphate: step 3/5. In terms of biological role, catalyzes the interconversion of 2-phosphoglycerate and 3-phosphoglycerate. The protein is 2,3-bisphosphoglycerate-independent phosphoglycerate mutase of Legionella pneumophila (strain Paris).